Here is a 344-residue protein sequence, read N- to C-terminus: Probable magnesium transporter NIPA9 (344 aa).

The Cytoplasmic segment spans residues 1–46 (MWESICLTLAATAGNNIGKVLQKKGTIILPPLSLKLKVLRAYAENK). 2 helical membrane-spanning segments follow: residues 47-67 (PWAL…RALS) and 68-88 (LAPV…LSVF). The Cytoplasmic portion of the chain corresponds to 89–98 (SHFYLKEVMN). The helical transmembrane segment at 99-119 (VFDWIGITVAGIGTIGVGAGG) threads the bilayer. The Extracellular segment spans residues 120 to 125 (EEQEAS). The helical transmembrane segment at 126-146 (LISVFQLLWLALVVAILFVLL) threads the bilayer. Residues 147–166 (NAWLHIFKRQRREQELGEYE) are Cytoplasmic-facing. A helical transmembrane segment spans residues 167 to 187 (VVEEIIYGLESGILFGMASVV). The Extracellular segment spans residues 188-191 (SKMG). A helical membrane pass occupies residues 192–212 (FVFVEQGFSTMFIPMCISISI). Residues 213–231 (CCSGTGFFYQTRGLKHGRA) are Cytoplasmic-facing. Residues 232–252 (IVVSTCAAVASIVTGVVAGMF) form a helical membrane-spanning segment. Topologically, residues 253–265 (ALGEKLPTSPSGR) are extracellular. The chain crosses the membrane as a helical span at residues 266–286 (LLLLLGWLLIMLGVVLLVTSS). The Cytoplasmic segment spans residues 287 to 344 (RLIRHLPRSFRRSRQTSLERGFNIRRTTSHTPKDTNPSAVIQAATLHHLLSSPSKDKD).

Belongs to the NIPA (TC 2.A.7) family. In terms of assembly, homodimer.

It is found in the cell membrane. Its subcellular location is the early endosome. Its function is as follows. Acts as a Mg(2+) transporter. Can also transport other divalent cations such as Fe(2+), Sr(2+), Ba(2+), Mn(2+) and Co(2+) but to a much less extent than Mg(2+). This is Probable magnesium transporter NIPA9 from Arabidopsis thaliana (Mouse-ear cress).